The chain runs to 517 residues: Serine carboxypeptidase ctsa-3.2 (517 aa).

The signal sequence occupies residues 1 to 21; sequence MWWTSLVFSVLLFDLIFISNC. Serine 172 is an active-site residue. Asparagine 269 carries an N-linked (GlcNAc...) asparagine glycan. Active-site residues include aspartate 418 and histidine 485.

It belongs to the peptidase S10 family.

This is Serine carboxypeptidase ctsa-3.2 from Caenorhabditis elegans.